Consider the following 222-residue polypeptide: Large ribosomal subunit protein bL20 (222 aa).

It belongs to the bacterial ribosomal protein bL20 family.

Functionally, binds directly to 23S ribosomal RNA and is necessary for the in vitro assembly process of the 50S ribosomal subunit. It is not involved in the protein synthesizing functions of that subunit. This is Large ribosomal subunit protein bL20 (rplT) from Paenarthrobacter aurescens (strain TC1).